The sequence spans 145 residues: Protein SprT-like (145 aa).

A SprT-like domain is found at 5 to 140 (DYVREVSLAD…ACGRCHGRLI (136 aa)). Zn(2+) is bound at residue His-64. Residue Glu-65 is part of the active site. Residue His-68 participates in Zn(2+) binding.

It belongs to the SprT family. Requires Zn(2+) as cofactor.

It is found in the cytoplasm. The protein is Protein SprT-like of Streptococcus equi subsp. zooepidemicus (strain MGCS10565).